Reading from the N-terminus, the 401-residue chain is MALLNLFFCLVFSSPLMAMPPVLQGRKSMSPDSILKDTSTDDGARDFQGRKFPQFMMQLYQNIIRGRDKDLSNLEHPTLQESDTVQSFITKSYTTVGNHWTLFFDMSSISRSNELKLAELRFSLPSFRKSHSVTVDIYHTNDGKEKLFMGSFKTKPSAALDADCKVFNLTILLQNFLTRGKRLIKDEYIQAKGLHLKDLEKSATEKGTENVDTLKQDQYHVSDFAAERIMLVVFAKEQSHAKSDPPSLGKKLFPSKYGIDDNANKVNGFRRLRRNKKEKTQIHVSTGPPKPIEEIKPKCKKVDMFVDFQKIGWGSWIVYPKAYNAYRCESTCAVPLNETENATNHSYIKSLLPLSDMERKECPSCVPVKMMSMSMLYYENEDFILRHHEEMIVEECGFKDM.

Residues M1–A18 form the signal peptide. Positions M19 to R274 are excised as a propeptide. N-linked (GlcNAc...) asparagine glycosylation is found at N168, N337, N341, and N344. 2 disulfide bridges follow: C299-C365 and C328-C396.

It belongs to the TGF-beta family. As to quaternary structure, monomer. The propeptide region interacts with bmp4 in a non-covalent manner. As to expression, expressed in the dorsal marginal region of late blastula, becoming restricted to the dorsal blastopore lip (Spemann organizer) at the early gastrula stage.

It localises to the secreted. Exhibits mesoderm-dorsalizing activity and neural-inducing activity, but lacks mesoderm-inducing activity. Regulates the expression of specific mesodermal and neural genes. Induces convergent extension movements at the embryonic midline by activating the fgf signaling pathway to induce t/bra expression in the organizer region. Acts with wnt11 to induce Spemann organizer cells and induce axis formation. The unprocessed protein antagonizes bmp-signaling. In Xenopus laevis (African clawed frog), this protein is Nodal homolog 3-B (nodal3-b).